A 573-amino-acid polypeptide reads, in one-letter code: Phosphoenolpyruvate-protein phosphotransferase (573 aa).

His-190 acts as the Tele-phosphohistidine intermediate in catalysis. Phosphoenolpyruvate-binding residues include Arg-297 and Arg-334. Positions 433 and 457 each coordinate Mg(2+). Residues 456–457 (ND) and Arg-467 each bind phosphoenolpyruvate. Cys-504 serves as the catalytic Proton donor.

This sequence belongs to the PEP-utilizing enzyme family. Homodimer. Mg(2+) serves as cofactor.

It is found in the cytoplasm. The catalysed reaction is L-histidyl-[protein] + phosphoenolpyruvate = N(pros)-phospho-L-histidyl-[protein] + pyruvate. Functionally, general (non sugar-specific) component of the phosphoenolpyruvate-dependent sugar phosphotransferase system (sugar PTS). This major carbohydrate active-transport system catalyzes the phosphorylation of incoming sugar substrates concomitantly with their translocation across the cell membrane. Enzyme I transfers the phosphoryl group from phosphoenolpyruvate (PEP) to the phosphoryl carrier protein (HPr). The chain is Phosphoenolpyruvate-protein phosphotransferase (ptsI) from Borreliella burgdorferi (strain ATCC 35210 / DSM 4680 / CIP 102532 / B31) (Borrelia burgdorferi).